Here is an 824-residue protein sequence, read N- to C-terminus: Tuftelin-interacting protein 11 (824 aa).

The interval 1-135 is disordered; sequence MSMSHLYGKD…RTFAGGIKSN (135 aa). Acidic residues predominate over residues 11–25; it reads EDSDGVEMENFEITD. Composition is skewed to basic and acidic residues over residues 41–61 and 85–114; these read QTKEEATYGMWAEHDSDDERP and PAAEEKSDSDSDSETQSRRENFPKDFEAKK. Residues 122 to 135 show a composition bias toward polar residues; the sequence is KPSQRTFAGGIKSN. The 47-residue stretch at 145-191 folds into the G-patch domain; the sequence is TKGIGQKLLQKMGYMPGRGLGKNAQGIIAPIEAKQRRGKGAVGAYGS.

Belongs to the TFP11/STIP family. As to quaternary structure, identified in the spliceosome C complex.

The protein localises to the nucleus. Functionally, involved in pre-mRNA splicing, specifically in spliceosome disassembly during late-stage splicing events. The sequence is that of Tuftelin-interacting protein 11 (tfip11) from Xenopus laevis (African clawed frog).